The following is a 398-amino-acid chain: tRNA-specific 2-thiouridylase MnmA (398 aa).

ATP-binding positions include 18–25 (AMSGGVDS) and Leu-44. Cys-112 functions as the Nucleophile in the catalytic mechanism. Cysteines 112 and 213 form a disulfide. Residue Gly-136 participates in ATP binding. The interaction with tRNA stretch occupies residues 163-165 (RDQ). Catalysis depends on Cys-213, which acts as the Cysteine persulfide intermediate.

It belongs to the MnmA/TRMU family.

The protein resides in the cytoplasm. The enzyme catalyses S-sulfanyl-L-cysteinyl-[protein] + uridine(34) in tRNA + AH2 + ATP = 2-thiouridine(34) in tRNA + L-cysteinyl-[protein] + A + AMP + diphosphate + H(+). Functionally, catalyzes the 2-thiolation of uridine at the wobble position (U34) of tRNA, leading to the formation of s(2)U34. This chain is tRNA-specific 2-thiouridylase MnmA, found in Rhizobium meliloti (strain 1021) (Ensifer meliloti).